We begin with the raw amino-acid sequence, 235 residues long: Keratin-associated protein 4-16 (235 aa).

A 16 X 5 AA repeats of C-C-[GIKRQVHEML]-[SPTRV]-[STVQRCP] region spans residues 1–132; that stretch reads MCSSKMPCSP…CCCPCCCLRP (132 aa). Tandem repeats lie at residues 23–27, 28–32, 33–37, 48–52, 53–57, 58–62, 63–67, 68–72, 78–82, 83–87, 88–92, 93–97, 103–107, 108–112, 118–122, and 128–132. Pro residues predominate over residues 203-224; sequence SPSPSLPSLSPPLPSPPLPSPH. A disordered region spans residues 203–235; the sequence is SPSPSLPSLSPPLPSPPLPSPHFPSVNPKSMLQ.

The protein belongs to the KRTAP type 4 family. As to quaternary structure, interacts with hair keratins.

Its function is as follows. In the hair cortex, hair keratin intermediate filaments are embedded in an interfilamentous matrix, consisting of hair keratin-associated proteins (KRTAP), which are essential for the formation of a rigid and resistant hair shaft through their extensive disulfide bond cross-linking with abundant cysteine residues of hair keratins. The matrix proteins include the high-sulfur and high-glycine-tyrosine keratins. In Homo sapiens (Human), this protein is Keratin-associated protein 4-16.